The sequence spans 318 residues: Acetaldehyde dehydrogenase 2 (318 aa).

An NAD(+)-binding site is contributed by 9–12 (SGNI). The active-site Acyl-thioester intermediate is Cys129. NAD(+) is bound by residues 160 to 168 (SAGPGTRAN) and Asn288.

The protein belongs to the acetaldehyde dehydrogenase family.

It catalyses the reaction acetaldehyde + NAD(+) + CoA = acetyl-CoA + NADH + H(+). The sequence is that of Acetaldehyde dehydrogenase 2 from Mycolicibacterium vanbaalenii (strain DSM 7251 / JCM 13017 / BCRC 16820 / KCTC 9966 / NRRL B-24157 / PYR-1) (Mycobacterium vanbaalenii).